Reading from the N-terminus, the 30-residue chain is FVVETENQLMSQGGRYYILPVIYGKGGGLG.

Belongs to the protease inhibitor I3 (leguminous Kunitz-type inhibitor) family.

Potent inhibitor of serine proteases plasma kallikrein, plasmin and coagulation factor XIIa. Weak inhibitor of serine proteases trypsin and coagulation factor Xa. Does not inhibit the serine proteases chymotrypsin, elastase or thrombin. Inhibits kinin release from HMW-kininogen by kallikrein in vitro. The sequence is that of Proteinase inhibitor CeKI from Paubrasilia echinata (Pau Brasil).